We begin with the raw amino-acid sequence, 88 residues long: Small ribosomal subunit protein bS20 (88 aa).

The protein belongs to the bacterial ribosomal protein bS20 family.

Binds directly to 16S ribosomal RNA. This chain is Small ribosomal subunit protein bS20, found in Rhodopseudomonas palustris (strain BisB18).